The sequence spans 330 residues: ADP-L-glycero-D-manno-heptose-6-epimerase (330 aa).

Residues 11 to 12 (FI), 32 to 33 (DD), Gln39, Gln54, 75 to 79 (QGACA), and Asn92 each bind NADP(+). Tyr139 functions as the Proton acceptor in the catalytic mechanism. Lys143 contacts NADP(+). Residue Asn168 coordinates substrate. Residues Val169 and Lys177 each coordinate NADP(+). Lys177 serves as the catalytic Proton acceptor. Substrate is bound by residues Arg179, His186, 200–203 (FGEH), Arg213, and Tyr292.

This sequence belongs to the NAD(P)-dependent epimerase/dehydratase family. HldD subfamily. As to quaternary structure, homopentamer. It depends on NADP(+) as a cofactor.

It carries out the reaction ADP-D-glycero-beta-D-manno-heptose = ADP-L-glycero-beta-D-manno-heptose. Its pathway is nucleotide-sugar biosynthesis; ADP-L-glycero-beta-D-manno-heptose biosynthesis; ADP-L-glycero-beta-D-manno-heptose from D-glycero-beta-D-manno-heptose 7-phosphate: step 4/4. Functionally, catalyzes the interconversion between ADP-D-glycero-beta-D-manno-heptose and ADP-L-glycero-beta-D-manno-heptose via an epimerization at carbon 6 of the heptose. This chain is ADP-L-glycero-D-manno-heptose-6-epimerase, found in Pseudomonas aeruginosa (strain UCBPP-PA14).